The following is a 117-amino-acid chain: Large-conductance mechanosensitive channel (117 aa).

The next 3 helical transmembrane spans lie at 7–27, 30–50, and 64–84; these read EFAL…GAAF, IVTA…FGTV, and GMFV…FIFV.

It belongs to the MscL family. As to quaternary structure, homopentamer.

The protein localises to the cell membrane. In terms of biological role, channel that opens in response to stretch forces in the membrane lipid bilayer. May participate in the regulation of osmotic pressure changes within the cell. The polypeptide is Large-conductance mechanosensitive channel (Staphylococcus saprophyticus subsp. saprophyticus (strain ATCC 15305 / DSM 20229 / NCIMB 8711 / NCTC 7292 / S-41)).